The chain runs to 234 residues: MNNQPLLLCNNLCKKYQEGQVLTEVLKNVTFAINQSEMMAIVGSSGSGKSTLLHLLGGLDTPTSGEVLFKGHSLNKMSSGARAELRNHELGFIYQFHHLLPDFNAVENVAMPLLIGGKNRGQAQKKAFEMLAAVGLEKRAHHRPSELSGGERQRVAIARALVNEPSLVLADEPTGNLDLRNADSIFALLGELNRQQGTAFLVVTHDLNLAGRLNRQVEMRDGYLQDELTVTGAL.

Residues 7 to 234 (LLCNNLCKKY…QDELTVTGAL (228 aa)) form the ABC transporter domain. 43 to 50 (GSSGSGKS) contacts ATP.

Belongs to the ABC transporter superfamily. Lipoprotein translocase (TC 3.A.1.125) family. The complex is composed of two ATP-binding proteins (LolD) and two transmembrane proteins (LolC and LolE).

The protein localises to the cell inner membrane. In terms of biological role, part of the ABC transporter complex LolCDE involved in the translocation of mature outer membrane-directed lipoproteins, from the inner membrane to the periplasmic chaperone, LolA. Responsible for the formation of the LolA-lipoprotein complex in an ATP-dependent manner. This is Lipoprotein-releasing system ATP-binding protein LolD from Photorhabdus laumondii subsp. laumondii (strain DSM 15139 / CIP 105565 / TT01) (Photorhabdus luminescens subsp. laumondii).